The sequence spans 187 residues: Elongation factor P (187 aa).

This sequence belongs to the elongation factor P family.

The protein resides in the cytoplasm. It functions in the pathway protein biosynthesis; polypeptide chain elongation. Its function is as follows. Involved in peptide bond synthesis. Stimulates efficient translation and peptide-bond synthesis on native or reconstituted 70S ribosomes in vitro. Probably functions indirectly by altering the affinity of the ribosome for aminoacyl-tRNA, thus increasing their reactivity as acceptors for peptidyl transferase. The protein is Elongation factor P of Desulfatibacillum aliphaticivorans.